A 501-amino-acid chain; its full sequence is L-arabinose isomerase (501 aa).

Mn(2+) is bound by residues Glu306, Glu333, His350, and His450.

Belongs to the arabinose isomerase family. In terms of assembly, homohexamer. Mn(2+) is required as a cofactor.

The catalysed reaction is beta-L-arabinopyranose = L-ribulose. The protein operates within carbohydrate degradation; L-arabinose degradation via L-ribulose; D-xylulose 5-phosphate from L-arabinose (bacterial route): step 1/3. Functionally, catalyzes the conversion of L-arabinose to L-ribulose. In Serratia proteamaculans (strain 568), this protein is L-arabinose isomerase.